The chain runs to 125 residues: Ribonuclease P protein component (125 aa).

Belongs to the RnpA family. Consists of a catalytic RNA component (M1 or rnpB) and a protein subunit.

The catalysed reaction is Endonucleolytic cleavage of RNA, removing 5'-extranucleotides from tRNA precursor.. RNaseP catalyzes the removal of the 5'-leader sequence from pre-tRNA to produce the mature 5'-terminus. It can also cleave other RNA substrates such as 4.5S RNA. The protein component plays an auxiliary but essential role in vivo by binding to the 5'-leader sequence and broadening the substrate specificity of the ribozyme. This Idiomarina loihiensis (strain ATCC BAA-735 / DSM 15497 / L2-TR) protein is Ribonuclease P protein component.